A 292-amino-acid polypeptide reads, in one-letter code: Protoheme IX farnesyltransferase (292 aa).

The next 9 helical transmembrane spans lie at Phe-11–Ile-31, Trp-37–Leu-57, Ala-85–Leu-105, Val-108–Trp-128, Val-133–Val-153, Ser-163–Ile-183, Val-199–Gly-219, Ala-223–Phe-243, and Trp-261–Ile-281.

It belongs to the UbiA prenyltransferase family. Protoheme IX farnesyltransferase subfamily.

It localises to the cell inner membrane. It carries out the reaction heme b + (2E,6E)-farnesyl diphosphate + H2O = Fe(II)-heme o + diphosphate. It functions in the pathway porphyrin-containing compound metabolism; heme O biosynthesis; heme O from protoheme: step 1/1. Its function is as follows. Converts heme B (protoheme IX) to heme O by substitution of the vinyl group on carbon 2 of heme B porphyrin ring with a hydroxyethyl farnesyl side group. This is Protoheme IX farnesyltransferase from Bdellovibrio bacteriovorus (strain ATCC 15356 / DSM 50701 / NCIMB 9529 / HD100).